The sequence spans 256 residues: 5-keto-4-deoxy-D-glucarate aldolase (256 aa).

The active-site Proton acceptor is the His50. Gln151 lines the substrate pocket. Position 153 (Glu153) interacts with Mg(2+). Ser178 and Asp179 together coordinate substrate. A Mg(2+)-binding site is contributed by Asp179.

The protein belongs to the HpcH/HpaI aldolase family. KDGluc aldolase subfamily. As to quaternary structure, homohexamer; trimer of dimers. Requires Mg(2+) as cofactor.

The catalysed reaction is 5-dehydro-4-deoxy-D-glucarate = 2-hydroxy-3-oxopropanoate + pyruvate. The enzyme catalyses 2-dehydro-3-deoxy-D-glucarate = 2-hydroxy-3-oxopropanoate + pyruvate. The protein operates within carbohydrate acid metabolism; galactarate degradation; D-glycerate from galactarate: step 2/3. In terms of biological role, catalyzes the reversible retro-aldol cleavage of both 5-keto-4-deoxy-D-glucarate and 2-keto-3-deoxy-D-glucarate to pyruvate and tartronic semialdehyde. The protein is 5-keto-4-deoxy-D-glucarate aldolase of Escherichia fergusonii (strain ATCC 35469 / DSM 13698 / CCUG 18766 / IAM 14443 / JCM 21226 / LMG 7866 / NBRC 102419 / NCTC 12128 / CDC 0568-73).